A 179-amino-acid polypeptide reads, in one-letter code: Large ribosomal subunit protein uL5 (179 aa).

Belongs to the universal ribosomal protein uL5 family. Part of the 50S ribosomal subunit; part of the 5S rRNA/L5/L18/L25 subcomplex. Contacts the 5S rRNA and the P site tRNA. Forms a bridge to the 30S subunit in the 70S ribosome.

In terms of biological role, this is one of the proteins that bind and probably mediate the attachment of the 5S RNA into the large ribosomal subunit, where it forms part of the central protuberance. In the 70S ribosome it contacts protein S13 of the 30S subunit (bridge B1b), connecting the 2 subunits; this bridge is implicated in subunit movement. Contacts the P site tRNA; the 5S rRNA and some of its associated proteins might help stabilize positioning of ribosome-bound tRNAs. In Chromohalobacter salexigens (strain ATCC BAA-138 / DSM 3043 / CIP 106854 / NCIMB 13768 / 1H11), this protein is Large ribosomal subunit protein uL5.